We begin with the raw amino-acid sequence, 533 residues long: Monogalactosyldiacylglycerol synthase 1, chloroplastic (533 aa).

Residues His-155 and Pro-189 each contribute to the a 1,2-diacyl-sn-glycero-3-phospho-(1'-sn-glycerol) site. His-155 is a UDP binding site. The segment at 192–215 (QLPRSYNFLVKHGTLWKMTYYGTS) is required for binding to diacyl glycerol. Residues Arg-324, Phe-413, Ile-414, 434 to 438 (GTIAE), and Glu-456 contribute to the UDP site.

This sequence belongs to the glycosyltransferase 28 family. As to quaternary structure, homodimer. As to expression, expressed in roots, stems, leaves, flowers, siliques and seeds.

The protein resides in the plastid. It is found in the chloroplast inner membrane. It catalyses the reaction a 1,2-diacyl-sn-glycerol + UDP-alpha-D-galactose = a 1,2-diacyl-3-O-(beta-D-galactosyl)-sn-glycerol + UDP + H(+). It carries out the reaction 1,2-di-(9Z,12Z-octadecadienoyl)-sn-glycerol + UDP-alpha-D-galactose = 1,2-di-(9Z,12Z-octadecadienoyl)-3-beta-D-galactosyl-sn-glycerol + UDP + H(+). The enzyme catalyses 1-(9Z-octadecenoyl)-2-hexadecanoyl-sn-glycerol + UDP-alpha-D-galactose = 1-(9Z-octadecenoyl)-2-hexadecanoyl-3-beta-D-galactosyl-sn-glycerol + UDP + H(+). The catalysed reaction is 1,2-di-(9Z-octadecenoyl)-sn-glycerol + UDP-alpha-D-galactose = 1,2-di-(9Z-octadecenoyl)-3-beta-D-galactosyl-sn-glycerol + UDP + H(+). With respect to regulation, activated by phosphatidate (PA) and phosphatidylglycerol (PG). Inhibited by galvestine-1. Its function is as follows. Involved in the synthesis of the major structural component of photosynthetic membranes. Required for proper thylakoid membrane biogenesis. Does not discriminate between prokaryotic (18:1/16:0) or eukaryotic (18:2/18:2) 1,2-diacylglycerol species, but operates with some preference for the prokaryotic one. Is responsible for most galactolipid synthesis in chloroplasts. Required for the formation of thylakoid membranes and functional photosynthetic electron transport during cotyledons greening in young seedlings. May link galactolipid synthesis with the coordinated transcriptional regulation of chloroplasts and other organelles during cotyledon greening. The polypeptide is Monogalactosyldiacylglycerol synthase 1, chloroplastic (Arabidopsis thaliana (Mouse-ear cress)).